The chain runs to 119 residues: Ribonuclease P protein component (119 aa).

This sequence belongs to the RnpA family. Consists of a catalytic RNA component (M1 or rnpB) and a protein subunit.

The enzyme catalyses Endonucleolytic cleavage of RNA, removing 5'-extranucleotides from tRNA precursor.. Functionally, RNaseP catalyzes the removal of the 5'-leader sequence from pre-tRNA to produce the mature 5'-terminus. It can also cleave other RNA substrates such as 4.5S RNA. The protein component plays an auxiliary but essential role in vivo by binding to the 5'-leader sequence and broadening the substrate specificity of the ribozyme. This Listeria innocua serovar 6a (strain ATCC BAA-680 / CLIP 11262) protein is Ribonuclease P protein component.